A 210-amino-acid chain; its full sequence is Large ribosomal subunit protein uL3 (210 aa).

Residues 139–165 (AEKVHRSPGSIGHATFPGKVFKGKKMP) form a disordered region.

The protein belongs to the universal ribosomal protein uL3 family. Part of the 50S ribosomal subunit. Forms a cluster with proteins L14 and L19.

One of the primary rRNA binding proteins, it binds directly near the 3'-end of the 23S rRNA, where it nucleates assembly of the 50S subunit. In Maridesulfovibrio salexigens (strain ATCC 14822 / DSM 2638 / NCIMB 8403 / VKM B-1763) (Desulfovibrio salexigens), this protein is Large ribosomal subunit protein uL3.